Consider the following 20-residue polypeptide: Trypsin inhibitor (20 aa).

The segment at 1–20 (APSDTTIAETLTITEEFFPD) is disordered.

As to expression, hemolymph.

The protein localises to the secreted. The protein resides in the extracellular space. In terms of biological role, inhibits trypsin stoichiometrically. Also inhibits chymotrypsin very weakly. In Mythimna unipuncta (Armyworm moth), this protein is Trypsin inhibitor.